Here is a 217-residue protein sequence, read N- to C-terminus: Ribosomal large subunit pseudouridine synthase E (217 aa).

Over residues 19-28 (HQVKRFSSQR) the composition is skewed to polar residues. Residues 19–38 (HQVKRFSSQRSTRRKPENQP) are disordered. Catalysis depends on Asp-79, which acts as the Nucleophile.

The protein belongs to the pseudouridine synthase RsuA family.

The catalysed reaction is uridine(2457) in 23S rRNA = pseudouridine(2457) in 23S rRNA. Responsible for synthesis of pseudouridine from uracil-2457 in 23S ribosomal RNA. In Escherichia coli O157:H7, this protein is Ribosomal large subunit pseudouridine synthase E (rluE).